Reading from the N-terminus, the 334-residue chain is Probable tRNA pseudouridine synthase B (334 aa).

The active-site Nucleophile is D82. Residues 250 to 325 form the PUA domain; the sequence is LPKIWIKDSA…IAVDVEKVFM (76 aa).

The protein belongs to the pseudouridine synthase TruB family. Type 2 subfamily.

It carries out the reaction uridine(55) in tRNA = pseudouridine(55) in tRNA. Could be responsible for synthesis of pseudouridine from uracil-55 in the psi GC loop of transfer RNAs. The sequence is that of Probable tRNA pseudouridine synthase B from Pyrococcus horikoshii (strain ATCC 700860 / DSM 12428 / JCM 9974 / NBRC 100139 / OT-3).